The primary structure comprises 184 residues: Bacterial microcompartment shell protein PduT (184 aa).

BMC domains follow at residues 4–86 (AIGI…PAIS) and 96–182 (AVGI…RQMV). Cys-38 serves as a coordination point for [4Fe-4S] cluster.

This sequence belongs to the bacterial microcompartments protein family. In terms of assembly, homotrimerizes to form a pseudohexamer with a large central pore, which is probably the binding site for the [4Fe-4S] center. Interacts with PduS. Originally suggested to be a homotetramer; this is incorrect. [4Fe-4S] cluster is required as a cofactor.

The protein resides in the bacterial microcompartment. It participates in polyol metabolism; 1,2-propanediol degradation. Functionally, a minor shell protein of the bacterial microcompartment (BMC) dedicated to 1,2-propanediol (1,2-PD) degradation. Overexpression of this protein leads to cells with either deposits or having lamina-like structures in the cytoplasm. Not absolutely required to make artificial BMCs. May selectively transport specific metabolites. Expression of a cosmid containing the full 21-gene pdu operon in E.coli allows E.coli to grow on 1,2-propanediol (1,2-PD) with the appearance of bacterial microcompartments (BMC) in its cytoplasm. Its function is as follows. The 1,2-PD-specific bacterial microcompartment (BMC) concentrates low levels of 1,2-PD catabolic enzymes, concentrates volatile reaction intermediates thus enhancing pathway flux and keeps the level of toxic, mutagenic propionaldehyde low. This Citrobacter freundii protein is Bacterial microcompartment shell protein PduT.